We begin with the raw amino-acid sequence, 382 residues long: MSEEQLNKHTAPGHAKPRVAVLFGGRSSEHAVSCVTAAGVLGAIDYDKYDVIPIGIAKTGQWVLVSGDTRQWSLSASSLPEVSPSARTVTLAEIGGEHQLIVASPNEVPQELGAVDVVFPLLHGPFGEDGTIQGLLELSDTRYVGAGVLASAVGMDKHYMKVVFEAAGLQVGPYIAVTDRQWLTDPEAIRKRVDRLGYPVFVKPARAGSSMGISKVDSLEGLDAAIAAAREHDLKLVIEAGIVGREIECAVLEGRGTEPPRTSMPGEIAVAPGEHEFYDFNAKYVEDDAASLSCPADLPDEAIARVRELAAAAFDAVGAEGLSRVDFFYTPDGELIINEINTMPGFTPKSMYPQMWAASGLGYAELIDELIYLALNRKTGLR.

In terms of domain architecture, ATP-grasp spans 161–372; the sequence is KVVFEAAGLQ…YAELIDELIY (212 aa). 193 to 248 is an ATP binding site; sequence VDRLGYPVFVKPARAGSSMGISKVDSLEGLDAAIAAAREHDLKLVIEAGIVGREIE. Positions 326, 339, and 341 each coordinate Mg(2+).

This sequence belongs to the D-alanine--D-alanine ligase family. Mg(2+) is required as a cofactor. Requires Mn(2+) as cofactor.

The protein localises to the cytoplasm. It catalyses the reaction 2 D-alanine + ATP = D-alanyl-D-alanine + ADP + phosphate + H(+). Its pathway is cell wall biogenesis; peptidoglycan biosynthesis. Its function is as follows. Cell wall formation. The protein is D-alanine--D-alanine ligase of Arthrobacter sp. (strain FB24).